A 370-amino-acid polypeptide reads, in one-letter code: MNTGGGQYTDFPAVETHGGQFISYDIFGSLFEITSKYRPPIIPIGRGAYGIVCSVLDTETNELVAMKKIANAFDNHMDAKRTLREIKLLRHLDHENIIAIRDVVPPPLRRQFSDVYISTELMDTDLHQIIRSNQSLSEEHCQYFLYQLLRGLKYIHSANIIHRDLKPSNLLLNANCDLKICDFGLARPTSENDFMTEYVVTRWYRAPELLLNSSDYTAAIDVWSVGCIFMELMNRKPLFPGKDHVHQMRLLTELLGTPTESDLGFTHNEDAKRYIRQLPNFPRQPLAKLFSHVNPMAIDLVDRMLTFDPNRRITVEQALNHQYLAKLHDPNDEPICQKPFSFEFEQQPLDEEQIKEMIYQEAIALNPTYG.

The region spanning 38–324 is the Protein kinase domain; it reads RPPIIPIGRG…VEQALNHQYL (287 aa). ATP-binding positions include 44–52 and K67; that span reads IGRGAYGIV. D164 functions as the Proton acceptor in the catalytic mechanism. A Phosphothreonine modification is found at T196. A TXY motif is present at residues 196–198; that stretch reads TEY. A Phosphotyrosine modification is found at Y198. Phosphothreonine is present on T201.

The protein belongs to the protein kinase superfamily. CMGC Ser/Thr protein kinase family. MAP kinase subfamily. In terms of assembly, interacts with DSPTP1B/MKP2, NDPK2 and VIP1. The interaction with DSPTP1B/MKP2 is repressed by fungal elicitation. Binds to LIP5. Interacts with VQ4. Interacts with RACK1A, RACK1B and RACK1C. Interacts with FLZ9. Interacts with MKK5. Post-translationally, dually phosphorylated on Thr-196 and Tyr-198, which activates the enzyme. Dephosphorylated by DSPTP1B/MKP2.

It is found in the cytoplasm. Its subcellular location is the nucleus. The protein resides in the cell cortex. It catalyses the reaction L-seryl-[protein] + ATP = O-phospho-L-seryl-[protein] + ADP + H(+). It carries out the reaction L-threonyl-[protein] + ATP = O-phospho-L-threonyl-[protein] + ADP + H(+). Its activity is regulated as follows. Activated by threonine and tyrosine phosphorylation. Activated by MAP kinase kinases MKK4, MKK5, MKK7 and MKK9. Activated in response to hydrogen peroxide, ozone, salt stress and flagellin bacterial elicitor. Triggered by Agrobacterium upon T-DNA transfer. Repressed by DSPTP1B/MKP2-mediated dephosphorylation. Its function is as follows. Involved in oxidative stress-mediated signaling cascade (such as ozone). Involved in the innate immune MAP kinase signaling cascade (MEKK1, MKK4/MKK5 and MPK3/MPK6) downstream of bacterial flagellin receptor FLS2. May be involved in hypersensitive response (HR)-mediated signaling cascade by modulating LIP5 phosphorylation and subsequent multivesicular bodies (MVBs) trafficking. May phosphorylate regulators of WRKY transcription factors. Mediates the phosphorylation of VIP1 and subsequent stress genes transcription in response to Agrobacterium. MKK9-MPK3/MPK6 module phosphorylates and activates EIN3, leading to the promotion of EIN3-mediated transcription in ethylene signaling. MPK3/MPK6 cascade regulates camalexin synthesis through transcriptional regulation of the biosynthetic genes after pathogen infection. YDA-MKK4/MKK5-MPK3/MPK6 module regulates stomatal cell fate before the guard mother cell (GMC) is specified. When activated, reinforces the feedback loop by phosphorylating BASL, and inhibits stomatal fate by phosphorylating SPCH. This MAPK cascade also functions downstream of the ER receptor in regulating coordinated local cell proliferation, which shapes the morphology of plant organs. The chain is Mitogen-activated protein kinase 3 from Arabidopsis thaliana (Mouse-ear cress).